Here is a 286-residue protein sequence, read N- to C-terminus: Protein N-terminal amidase (286 aa).

The region spanning 1 to 286 (MKFGCVQFFP…NGIVVGELEK (286 aa)) is the CN hydrolase domain. Glutamate 43 (proton acceptor) is an active-site residue. The Proton donor role is filled by lysine 121. Residue cysteine 155 is the Nucleophile of the active site.

It belongs to the carbon-nitrogen hydrolase superfamily.

It localises to the cytoplasm. It is found in the nucleus. Functionally, deamidates N-terminal Asn and Gln. Component of a targeting complex in the N-end rule pathway. This is Protein N-terminal amidase (nta1) from Schizosaccharomyces pombe (strain 972 / ATCC 24843) (Fission yeast).